Here is a 292-residue protein sequence, read N- to C-terminus: Formamidopyrimidine-DNA glycosylase (292 aa).

Catalysis depends on proline 2, which acts as the Schiff-base intermediate with DNA. Glutamate 3 functions as the Proton donor in the catalytic mechanism. Lysine 60 acts as the Proton donor; for beta-elimination activity in catalysis. Histidine 109, arginine 128, and lysine 173 together coordinate DNA. Residues 258–292 form an FPG-type zinc finger; it reads NVYRRTGKKCRQCKNLIERQKISGRSTHWCRKCQK. The Proton donor; for delta-elimination activity role is filled by arginine 282.

The protein belongs to the FPG family. As to quaternary structure, monomer. Zn(2+) is required as a cofactor.

The enzyme catalyses Hydrolysis of DNA containing ring-opened 7-methylguanine residues, releasing 2,6-diamino-4-hydroxy-5-(N-methyl)formamidopyrimidine.. It catalyses the reaction 2'-deoxyribonucleotide-(2'-deoxyribose 5'-phosphate)-2'-deoxyribonucleotide-DNA = a 3'-end 2'-deoxyribonucleotide-(2,3-dehydro-2,3-deoxyribose 5'-phosphate)-DNA + a 5'-end 5'-phospho-2'-deoxyribonucleoside-DNA + H(+). Functionally, involved in base excision repair of DNA damaged by oxidation or by mutagenic agents. Acts as a DNA glycosylase that recognizes and removes damaged bases. Has a preference for oxidized purines, such as 7,8-dihydro-8-oxoguanine (8-oxoG). Has AP (apurinic/apyrimidinic) lyase activity and introduces nicks in the DNA strand. Cleaves the DNA backbone by beta-delta elimination to generate a single-strand break at the site of the removed base with both 3'- and 5'-phosphates. This Prochlorococcus marinus subsp. pastoris (strain CCMP1986 / NIES-2087 / MED4) protein is Formamidopyrimidine-DNA glycosylase.